The primary structure comprises 415 residues: Ornithine cyclodeaminase (415 aa).

Residues N241, A242, D320, T352, L354, H355, D373, D396, and V397 each contribute to the NAD(+) site.

It belongs to the AgrE/ArgZ ornithine cyclodeaminase family. It depends on NAD(+) as a cofactor.

It carries out the reaction L-ornithine = L-proline + NH4(+). Catalyzes the conversion of ornithine to proline, with the release of ammonia. The chain is Ornithine cyclodeaminase from Methanococcus maripaludis (strain DSM 14266 / JCM 13030 / NBRC 101832 / S2 / LL).